Consider the following 402-residue polypeptide: N-acetyllactosaminide beta-1,6-N-acetylglucosaminyl-transferase (402 aa).

Residues 1-7 lie on the Cytoplasmic side of the membrane; it reads MMGSWKH. A helical; Signal-anchor for type II membrane protein membrane pass occupies residues 8-23; it reads CLFSASLISALIFVFV. The Lumenal portion of the chain corresponds to 24–400; that stretch reads YNTELWENKR…QSETAIQPSW (377 aa). Asn41 carries N-linked (GlcNAc...) asparagine glycosylation.

Belongs to the glycosyltransferase 14 family. Expressed in lens epithelium cells. In terms of tissue distribution, expressed in reticulocytes.

The protein resides in the golgi apparatus membrane. The enzyme catalyses a beta-D-Gal-(1-&gt;4)-beta-D-GlcNAc-(1-&gt;3)-beta-D-Gal-(1-&gt;4)-beta-D-GlcNAc derivative + UDP-N-acetyl-alpha-D-glucosamine = a beta-D-Gal-(1-&gt;4)-beta-D-GlcNAc-(1-&gt;3)-[beta-D-GlcNAc-(1-&gt;6)]-beta-D-Gal-(1-&gt;4)-N-acetyl-beta-D-glucosaminyl derivative + UDP + H(+). It functions in the pathway protein modification; protein glycosylation. Functionally, branching enzyme that converts linear into branched poly-N-acetyllactosaminoglycans. Introduces the blood group I antigen during embryonic development. It is closely associated with the development and maturation of erythroid cells. Its function is as follows. Determines the expression of the blood group I antigen in erythrocytes. The sequence is that of N-acetyllactosaminide beta-1,6-N-acetylglucosaminyl-transferase (GCNT2) from Homo sapiens (Human).